The primary structure comprises 277 residues: Thiazole synthase (277 aa).

Lys-116 functions as the Schiff-base intermediate with DXP in the catalytic mechanism. Residues Gly-177, 203–204 (AG), and 225–226 (NT) contribute to the 1-deoxy-D-xylulose 5-phosphate site.

The protein belongs to the ThiG family. Homotetramer. Forms heterodimers with either ThiH or ThiS.

It is found in the cytoplasm. The catalysed reaction is [ThiS sulfur-carrier protein]-C-terminal-Gly-aminoethanethioate + 2-iminoacetate + 1-deoxy-D-xylulose 5-phosphate = [ThiS sulfur-carrier protein]-C-terminal Gly-Gly + 2-[(2R,5Z)-2-carboxy-4-methylthiazol-5(2H)-ylidene]ethyl phosphate + 2 H2O + H(+). Its pathway is cofactor biosynthesis; thiamine diphosphate biosynthesis. In terms of biological role, catalyzes the rearrangement of 1-deoxy-D-xylulose 5-phosphate (DXP) to produce the thiazole phosphate moiety of thiamine. Sulfur is provided by the thiocarboxylate moiety of the carrier protein ThiS. In vitro, sulfur can be provided by H(2)S. The polypeptide is Thiazole synthase (Thermosynechococcus vestitus (strain NIES-2133 / IAM M-273 / BP-1)).